We begin with the raw amino-acid sequence, 122 residues long: Large ribosomal subunit protein uL18 (122 aa).

This sequence belongs to the universal ribosomal protein uL18 family. In terms of assembly, part of the 50S ribosomal subunit; part of the 5S rRNA/L5/L18/L25 subcomplex. Contacts the 5S and 23S rRNAs.

Its function is as follows. This is one of the proteins that bind and probably mediate the attachment of the 5S RNA into the large ribosomal subunit, where it forms part of the central protuberance. The polypeptide is Large ribosomal subunit protein uL18 (Thermosipho melanesiensis (strain DSM 12029 / CIP 104789 / BI429)).